The primary structure comprises 161 residues: Arachidonate 5-lipoxygenase-activating protein (161 aa).

Residues 1–8 lie on the Lumenal side of the membrane; sequence MDQEAVGN. The chain crosses the membrane as a helical span at residues 9–30; the sequence is VVLLALVTLISVVQNAFFAHKV. Over 31–52 the chain is Cytoplasmic; that stretch reads EHESKAHNGRSFQRTGTLAFER. The chain crosses the membrane as a helical span at residues 53-77; the sequence is VYTANQNCVDAYPTFLVVLWTAGLL. Over 78–80 the chain is Lumenal; it reads CSQ. Residues 81–102 traverse the membrane as a helical segment; the sequence is VPAAFAGLMYLFVRQKYFVGYL. At 103–107 the chain is on the cytoplasmic side; the sequence is GERTQ. The stretch at 108–115 is an intramembrane region; sequence STPGYIFG. A helical transmembrane segment spans residues 116–128; that stretch reads KRIILFLFLMSFA. At 129 to 161 the chain is on the lumenal side; sequence GILNHYLIFFFGSDFENYIRTVSTTISPLLLIP.

It belongs to the MAPEG family. As to quaternary structure, homotrimer. Interacts with LTC4S and ALOX5.

Its subcellular location is the nucleus membrane. It is found in the endoplasmic reticulum membrane. In terms of biological role, required for leukotriene biosynthesis by ALOX5 (5-lipoxygenase). Anchors ALOX5 to the membrane. Binds arachidonic acid, and could play an essential role in the transfer of arachidonic acid to ALOX5. Binds to MK-886, a compound that blocks the biosynthesis of leukotrienes. This is Arachidonate 5-lipoxygenase-activating protein (Alox5ap) from Mus musculus (Mouse).